Reading from the N-terminus, the 307-residue chain is N-myc-interactor (307 aa).

Positions 1–24 (MEADKDDTQQILKEHSPDEFIKDE) are disordered. A Phosphoserine modification is found at Ser-16. Lys-22 participates in a covalent cross-link: Glycyl lysine isopeptide (Lys-Gly) (interchain with G-Cter in ubiquitin). Residues 30–64 (IDEITKKNIQLKKEIQKLETELQEATKEFQIKEDI) are a coiled coil. 2 consecutive NID domains span residues 103–192 (GQAL…GEVD) and 201–292 (GSAV…EVDV).

Belongs to the NMI family. As to quaternary structure, interacts with MYCN and MYC, as well as with other transcription factors with a Zip, HLH or a HLH-Zip motif. Interacts with all STAT proteins except STAT2. Interacts with IRF7, the interaction is direct and leads to the inhibition of IRF7-mediated type I IFN production. Interacts (via coiled-coil domain) with TRIM21 (via the SPRY domain); the interaction leads to 'Lys-63'-linked ubiquitination of NMI. Interacts with IFI35; the interaction is direct and is facilitated by TRIM21. Interacts with TLR4; the interaction is direct and leads to NF-kappa-B activation. (Microbial infection) Interacts with human cytomegalovirus protein UL23; this interaction inhibits NMI-mediated transcription of interferon-gamma stimulated genes. Ubiquitinated. 'Lys-63'-linked ubiquitination by TRIM21 promotes interaction with IFI35 and inhibits virus-triggered type I IFN-beta production. In terms of tissue distribution, expressed in adult spleen, liver, and kidney. Expressed in fetal thymus, liver, placenta, spleen, lung, and kidney but not brain. Expressed in macrophages.

The protein localises to the cytoplasm. It localises to the nucleus. It is found in the secreted. Functionally, acts as a signaling pathway regulator involved in innate immune system response. In response to interleukin 2/IL2 and interferon IFN-gamma/IFNG, interacts with signal transducer and activator of transcription/STAT which activate the transcription of downstream genes involved in a multitude of signals for development and homeostasis. Enhances the recruitment of CBP/p300 coactivators to STAT1 and STAT5, resulting in increased STAT1- and STAT5-dependent transcription. In response to interferon IFN-alpha, associates in a complex with signaling pathway regulator IFI35 to regulate immune response; the complex formation prevents proteasome-mediated degradation of IFI35. In complex with IFI35, inhibits virus-triggered type I IFN-beta production when ubiquitinated by ubiquitin-protein ligase TRIM21. In complex with IFI35, negatively regulates nuclear factor NF-kappa-B signaling by inhibiting the nuclear translocation, activation and transcription of NF-kappa-B subunit p65/RELA, resulting in the inhibition of endothelial cell proliferation, migration and re-endothelialization of injured arteries. Negatively regulates virus-triggered type I interferon/IFN production by inducing proteosome-dependent degradation of IRF7, a transcriptional regulator of type I IFN, thereby interfering with cellular antiviral responses. Beside its role as an intracellular signaling pathway regulator, also functions extracellularly as damage-associated molecular patterns (DAMPs) to promote inflammation, when actively released by macrophage to the extracellular space during cell injury or pathogen invasion. Macrophage-secreted NMI activates NF-kappa-B signaling in adjacent macrophages through Toll-like receptor 4/TLR4 binding and activation, thereby inducing NF-kappa-B translocation from the cytoplasm into the nucleus which promotes the release of pro-inflammatory cytokines. The protein is N-myc-interactor of Homo sapiens (Human).